Reading from the N-terminus, the 211-residue chain is Thiamine-phosphate synthase (211 aa).

4-amino-2-methyl-5-(diphosphooxymethyl)pyrimidine contacts are provided by residues 37 to 41 and asparagine 69; that span reads QLRIK. Positions 70 and 89 each coordinate Mg(2+). A 4-amino-2-methyl-5-(diphosphooxymethyl)pyrimidine-binding site is contributed by serine 108. 134-136 contacts 2-[(2R,5Z)-2-carboxy-4-methylthiazol-5(2H)-ylidene]ethyl phosphate; sequence TQT. Residue lysine 137 participates in 4-amino-2-methyl-5-(diphosphooxymethyl)pyrimidine binding. 2-[(2R,5Z)-2-carboxy-4-methylthiazol-5(2H)-ylidene]ethyl phosphate contacts are provided by residues glycine 166 and 186-187; that span reads VS.

Belongs to the thiamine-phosphate synthase family. Mg(2+) serves as cofactor.

The enzyme catalyses 2-[(2R,5Z)-2-carboxy-4-methylthiazol-5(2H)-ylidene]ethyl phosphate + 4-amino-2-methyl-5-(diphosphooxymethyl)pyrimidine + 2 H(+) = thiamine phosphate + CO2 + diphosphate. It catalyses the reaction 2-(2-carboxy-4-methylthiazol-5-yl)ethyl phosphate + 4-amino-2-methyl-5-(diphosphooxymethyl)pyrimidine + 2 H(+) = thiamine phosphate + CO2 + diphosphate. It carries out the reaction 4-methyl-5-(2-phosphooxyethyl)-thiazole + 4-amino-2-methyl-5-(diphosphooxymethyl)pyrimidine + H(+) = thiamine phosphate + diphosphate. It participates in cofactor biosynthesis; thiamine diphosphate biosynthesis; thiamine phosphate from 4-amino-2-methyl-5-diphosphomethylpyrimidine and 4-methyl-5-(2-phosphoethyl)-thiazole: step 1/1. Functionally, condenses 4-methyl-5-(beta-hydroxyethyl)thiazole monophosphate (THZ-P) and 2-methyl-4-amino-5-hydroxymethyl pyrimidine pyrophosphate (HMP-PP) to form thiamine monophosphate (TMP). The polypeptide is Thiamine-phosphate synthase (Shigella sonnei (strain Ss046)).